The primary structure comprises 666 residues: Sodium/potassium/calcium exchanger 2 (666 aa).

The Cytoplasmic segment spans residues 1–38; sequence MDLHQSPTARLLQKWCSHESPFGCRRHYNSRKKLKLIR. The chain crosses the membrane as a helical span at residues 39–59; sequence VIGLVMGLVAVSTVPFSISAF. The Extracellular portion of the chain corresponds to 60 to 133; sequence TETDSQSNRG…DIFSLEERRK (74 aa). Positions 63 to 122 are disordered; sequence DSQSNRGEASDMSGPRVAQGHRQRTLLDLNDKIRDYTPQPPASQEDQAENSTEHTQGDYP. Asn112 is a glycosylation site (N-linked (GlcNAc...) asparagine). Positions 113–122 are enriched in basic and acidic residues; the sequence is STEHTQGDYP. Residues 134–154 form a helical membrane-spanning segment; the sequence is GAIILHVIGMIYMFIALAIVC. The Cytoplasmic portion of the chain corresponds to 155–179; sequence DEFFVPSLTVITEKLGISDDVAGAT. One copy of the Alpha-1 repeat lies at 175-215; it reads VAGATFMAAGGSAPELFTSLIGVFIAHSNVGIGTIVGSAVF. A helical transmembrane segment spans residues 180–200; the sequence is FMAAGGSAPELFTSLIGVFIA. The Extracellular portion of the chain corresponds to 201–205; sequence HSNVG. A helical transmembrane segment spans residues 206-226; that stretch reads IGTIVGSAVFNILFVIGMCAL. The Cytoplasmic portion of the chain corresponds to 227–237; the sequence is FSREILNLTWW. The helical transmembrane segment at 238–258 threads the bilayer; it reads PLFRDVSFYIVDLLMLITFFL. The Extracellular segment spans residues 259-260; that stretch reads DN. A helical membrane pass occupies residues 261–281; the sequence is VIMWWESLLLLTAYFAYVVFM. At 282-502 the chain is on the cytoplasmic side; that stretch reads KFNVQVERWV…PDVRKPASRK (221 aa). Positions 311 to 336 are disordered; it reads KSPTAGDKDGPTLPSKPRLQRGGSSA. Ser337 and Ser341 each carry phosphoserine. The tract at residues 397–467 is disordered; the sequence is VDENERQNGA…EEDDQPLSLS (71 aa). Residues 416–442 are compositionally biased toward polar residues; sequence PNSTSTEVEMTPSSEASEPVQNGNLSH. The helical transmembrane segment at 503–523 threads the bilayer; it reads FFPITFFGSITWIAVFSYLMV. Over 524–538 the chain is Extracellular; that stretch reads WWAHQVGETIGISEE. A helical membrane pass occupies residues 539–559; sequence IMGLTILAAGTSIPDLITSVI. The stretch at 546–577 is one Alpha-2 repeat; the sequence is AAGTSIPDLITSVIVARKGLGDMAVSSSVGSN. At 560–574 the chain is on the cytoplasmic side; sequence VARKGLGDMAVSSSV. A helical transmembrane segment spans residues 575 to 595; that stretch reads GSNIFDITVGLPLPWLLYTII. The Extracellular segment spans residues 596-607; that stretch reads HRFSPVTVSSNG. The helical transmembrane segment at 608-628 threads the bilayer; sequence LFCAIVLLFIMLLFVILSIAL. The Cytoplasmic segment spans residues 629 to 635; that stretch reads CKWRMNK. The chain crosses the membrane as a helical span at residues 636–656; it reads ILGFIMFGLYFVFLVVSVLLE. Topologically, residues 657–666 are extracellular; sequence DKVLVCPVSI.

It belongs to the Ca(2+):cation antiporter (CaCA) (TC 2.A.19) family. SLC24A subfamily.

It is found in the cell membrane. It carries out the reaction Ca(2+)(out) + K(+)(out) + 4 Na(+)(in) = Ca(2+)(in) + K(+)(in) + 4 Na(+)(out). Functionally, calcium, potassium:sodium antiporter that transports 1 Ca(2+) and 1 K(+) in exchange for 4 Na(+). Required for learming and memory by regulating neuronal Ca(2+), which is essential for the development of synaptic plasticity. The polypeptide is Sodium/potassium/calcium exchanger 2 (Mus musculus (Mouse)).